The chain runs to 653 residues: ATP-dependent rRNA helicase SPB4 (653 aa).

Residues 17–45 (WQALTPPLSEWILDAVAAMGFTRMTPVQA) carry the Q motif motif. One can recognise a Helicase ATP-binding domain in the interval 48–257 (IPLFMGHKDV…RVGLRNPVKI (210 aa)). 61-68 (AVTGSGKT) contacts ATP. A DEAD box motif is present at residues 205 to 208 (DEAD). Residues 291–444 (AIRQILNSID…SPPVALSDTL (154 aa)) form the Helicase C-terminal domain. Residues 534–653 (KQREKHRQES…DGESEFEGFD (120 aa)) are disordered. The segment covering 558-569 (PSSSSNNDTAPW) has biased composition (polar residues). Residues 571-627 (KTLEKKSDKEKRRERKRAKKEREHWEKMTEEEKTKSRETHQMLEELRKKNRQELNAK) adopt a coiled-coil conformation. Basic and acidic residues-rich tracts occupy residues 572-581 (TLEKKSDKEK) and 590-626 (KEREHWEKMTEEEKTKSRETHQMLEELRKKNRQELNA). The segment covering 627 to 636 (KSHTSSSVLS) has biased composition (polar residues). A compositionally biased stretch (acidic residues) spans 641-653 (AELDGESEFEGFD).

Belongs to the DEAD box helicase family. DDX55/SPB4 subfamily. In terms of assembly, component of pre-60S ribosomal complexes.

It localises to the nucleus. The protein resides in the nucleolus. The enzyme catalyses ATP + H2O = ADP + phosphate + H(+). Its function is as follows. ATP-binding RNA helicase involved in the biogenesis of 60S ribosomal subunits. Binds 90S pre-ribosomal particles and dissociates from pre-60S ribosomal particles after processing of 27SB pre-rRNA. Required for the normal formation of 18S rRNA through the processing of pre-rRNAs at sites A0, A1 and A2, and the normal formation of 25S and 5.8S rRNAs through the processing of pre-rRNAs at sites C1 and C2. This is ATP-dependent rRNA helicase SPB4 from Coccidioides immitis (strain RS) (Valley fever fungus).